The sequence spans 276 residues: Sulfur carrier protein FdhD (276 aa).

Catalysis depends on Cys-120, which acts as the Cysteine persulfide intermediate.

This sequence belongs to the FdhD family.

It localises to the cytoplasm. Its function is as follows. Required for formate dehydrogenase (FDH) activity. Acts as a sulfur carrier protein that transfers sulfur from IscS to the molybdenum cofactor prior to its insertion into FDH. This Bordetella bronchiseptica (strain ATCC BAA-588 / NCTC 13252 / RB50) (Alcaligenes bronchisepticus) protein is Sulfur carrier protein FdhD.